The chain runs to 222 residues: Exosome complex component Rrp4 (222 aa).

The S1 motif domain maps to 63-131 (NDSVIGKVVD…EVKKVKLGLH (69 aa)). The region spanning 139–200 (EGGTLAYITP…EIVKRALEMI (62 aa)) is the KH domain.

This sequence belongs to the RRP4 family. Component of the archaeal exosome complex. Forms a trimer of Rrp4 and/or Csl4 subunits. The trimer associates with a hexameric ring-like arrangement composed of 3 Rrp41-Rrp42 heterodimers.

The protein resides in the cytoplasm. Non-catalytic component of the exosome, which is a complex involved in RNA degradation. Increases the RNA binding and the efficiency of RNA degradation. Confers strong poly(A) specificity to the exosome. The protein is Exosome complex component Rrp4 of Methanothermus fervidus (strain ATCC 43054 / DSM 2088 / JCM 10308 / V24 S).